A 112-amino-acid polypeptide reads, in one-letter code: Mitochondrial import inner membrane translocase subunit TIM14-1 (112 aa).

Ala2 carries the post-translational modification N-acetylalanine. Residues 7 to 23 traverse the membrane as a helical segment; sequence AGVAVAATALAGRYGIQ. In terms of domain architecture, J spans 53-112; the sequence is EAALILGVRESVAAEKVKEAHRKVMVANHPDAGGSHFLASKINEAKDVMLGKTKNSGSAF.

This sequence belongs to the TIM14 family. As to quaternary structure, probable component of the PAM complex at least composed of a mitochondrial HSP70 protein, TIMM44 and TIMM14. The complex interacts with the TIMM23 component of the TIM17:23 complex.

It is found in the mitochondrion. Its subcellular location is the mitochondrion inner membrane. Component of the PAM complex, a complex required for the translocation of transit peptide-containing proteins from the inner membrane into the mitochondrial matrix in an ATP-dependent manner. The protein is Mitochondrial import inner membrane translocase subunit TIM14-1 (TIM14-1) of Arabidopsis thaliana (Mouse-ear cress).